The sequence spans 309 residues: Protein-L-isoaspartate O-methyltransferase (309 aa).

The tract at residues 1 to 46 (MSGERAKRFPLALEDLKRAPRKSDGRAGERHAAIAAPKAADKPAAV) is disordered. Residues 14–32 (EDLKRAPRKSDGRAGERHA) are compositionally biased toward basic and acidic residues. Residues 33–46 (AIAAPKAADKPAAV) are compositionally biased toward low complexity. Residue Ser-156 is part of the active site.

It belongs to the methyltransferase superfamily. L-isoaspartyl/D-aspartyl protein methyltransferase family.

The protein resides in the cytoplasm. It catalyses the reaction [protein]-L-isoaspartate + S-adenosyl-L-methionine = [protein]-L-isoaspartate alpha-methyl ester + S-adenosyl-L-homocysteine. Catalyzes the methyl esterification of L-isoaspartyl residues in peptides and proteins that result from spontaneous decomposition of normal L-aspartyl and L-asparaginyl residues. It plays a role in the repair and/or degradation of damaged proteins. The chain is Protein-L-isoaspartate O-methyltransferase from Burkholderia vietnamiensis (strain G4 / LMG 22486) (Burkholderia cepacia (strain R1808)).